A 499-amino-acid polypeptide reads, in one-letter code: Putative protease Do-like 12, mitochondrial (499 aa).

The N-terminal 24 residues, 1–24 (MLFRSCVGMVSRYSRALLPTITIS), are a transit peptide targeting the mitochondrion. The interval 94–259 (GGSGFAIAGK…IPTPIIRHFI (166 aa)) is serine protease. Active-site charge relay system residues include His-110, Asp-144, and Ser-222. The 85-residue stretch at 272 to 356 (GSLVLSCQSM…DENILVKVLR (85 aa)) folds into the PDZ domain.

Belongs to the peptidase S1C family.

The protein resides in the mitochondrion matrix. Its function is as follows. Putative serine protease. This is Putative protease Do-like 12, mitochondrial (DEGP12) from Arabidopsis thaliana (Mouse-ear cress).